Reading from the N-terminus, the 52-residue chain is Conotoxin Cal9.2c (52 aa).

The propeptide occupies K1–L6. Disulfide bonds link C14/C31, C19/C41, and C21/C46.

Expressed by the venom duct.

The protein localises to the secreted. Functionally, probable neurotoxin with unknown target. Possibly targets ion channels. In Californiconus californicus (California cone), this protein is Conotoxin Cal9.2c.